Consider the following 61-residue polypeptide: Sec-independent protein translocase protein TatA (61 aa).

The helical transmembrane segment at Gly2 to Phe22 threads the bilayer.

This sequence belongs to the TatA/E family. The Tat system comprises two distinct complexes: a TatABC complex, containing multiple copies of TatA, TatB and TatC subunits, and a separate TatA complex, containing only TatA subunits. Substrates initially bind to the TatABC complex, which probably triggers association of the separate TatA complex to form the active translocon.

Its subcellular location is the cell inner membrane. Its function is as follows. Part of the twin-arginine translocation (Tat) system that transports large folded proteins containing a characteristic twin-arginine motif in their signal peptide across membranes. TatA could form the protein-conducting channel of the Tat system. The sequence is that of Sec-independent protein translocase protein TatA from Legionella pneumophila (strain Paris).